Reading from the N-terminus, the 371-residue chain is Cytochrome b (371 aa).

4 helical membrane-spanning segments follow: residues 25–45 (FGSMLLTCSALQVMTGFFLAI), 69–90 (WIMQNLHAIGASMFFICIYIHI), 105–125 (WLSGTTLLIILMATAFFGYVL), and 170–190 (FFALHFILPFAIISMSSIHIM). The heme b site is built by H75 and H89. Heme b-binding residues include H174 and H188. H193 serves as a coordination point for a ubiquinone. Transmembrane regions (helical) follow at residues 218–238 (HKDILMLTIMITTMFTIMSFS), 280–300 (LGGTVALVLSVAILMTMPFTH), 312–332 (IMQLVFWTLIATFITITWAAT), and 339–358 (FTIIGQTTSFLYFSFFIMNP).

It belongs to the cytochrome b family. In terms of assembly, the cytochrome bc1 complex contains 3 respiratory subunits (MT-CYB, CYC1 and UQCRFS1), 2 core proteins (UQCRC1 and UQCRC2) and probably 6 low-molecular weight proteins. It depends on heme b as a cofactor.

Its subcellular location is the mitochondrion inner membrane. In terms of biological role, component of the ubiquinol-cytochrome c reductase complex (complex III or cytochrome b-c1 complex) that is part of the mitochondrial respiratory chain. The b-c1 complex mediates electron transfer from ubiquinol to cytochrome c. Contributes to the generation of a proton gradient across the mitochondrial membrane that is then used for ATP synthesis. The chain is Cytochrome b (MT-CYB) from Coluber constrictor (Eastern racer).